Here is a 180-residue protein sequence, read N- to C-terminus: ADP-ribosylation factor-like protein 1 (180 aa).

Gly2 is lipidated: N-myristoyl glycine. GTP is bound by residues 23–30 (GLDGAGKT), 66–70 (DLGGQ), and 125–128 (NKQD).

The protein belongs to the small GTPase superfamily. Arf family.

GTP-binding protein involved in protein trafficking; may modulate vesicle budding and uncoating within the Golgi apparatus. The polypeptide is ADP-ribosylation factor-like protein 1 (Arl1) (Drosophila melanogaster (Fruit fly)).